A 160-amino-acid polypeptide reads, in one-letter code: Sec-independent protein translocase protein TatB (160 aa).

The helical transmembrane segment at 1–21 (MIDLGVSKIALIGAVALIVIG) threads the bilayer. Disordered regions lie at residues 70-100 (ARDVETSIQTSASDFEKSWSDATGSDASTAT) and 133-160 (RSGVRTKAQSGAARVARFRPQSGRSSSF). Over residues 89–100 (SDATGSDASTAT) the composition is skewed to polar residues.

This sequence belongs to the TatB family. In terms of assembly, the Tat system comprises two distinct complexes: a TatABC complex, containing multiple copies of TatA, TatB and TatC subunits, and a separate TatA complex, containing only TatA subunits. Substrates initially bind to the TatABC complex, which probably triggers association of the separate TatA complex to form the active translocon.

The protein localises to the cell inner membrane. Its function is as follows. Part of the twin-arginine translocation (Tat) system that transports large folded proteins containing a characteristic twin-arginine motif in their signal peptide across membranes. Together with TatC, TatB is part of a receptor directly interacting with Tat signal peptides. TatB may form an oligomeric binding site that transiently accommodates folded Tat precursor proteins before their translocation. The polypeptide is Sec-independent protein translocase protein TatB (Polaromonas sp. (strain JS666 / ATCC BAA-500)).